We begin with the raw amino-acid sequence, 255 residues long: Imidazole glycerol phosphate synthase subunit HisF (255 aa).

Residues aspartate 12 and aspartate 131 contribute to the active site.

This sequence belongs to the HisA/HisF family. As to quaternary structure, heterodimer of HisH and HisF.

It is found in the cytoplasm. It carries out the reaction 5-[(5-phospho-1-deoxy-D-ribulos-1-ylimino)methylamino]-1-(5-phospho-beta-D-ribosyl)imidazole-4-carboxamide + L-glutamine = D-erythro-1-(imidazol-4-yl)glycerol 3-phosphate + 5-amino-1-(5-phospho-beta-D-ribosyl)imidazole-4-carboxamide + L-glutamate + H(+). The protein operates within amino-acid biosynthesis; L-histidine biosynthesis; L-histidine from 5-phospho-alpha-D-ribose 1-diphosphate: step 5/9. Functionally, IGPS catalyzes the conversion of PRFAR and glutamine to IGP, AICAR and glutamate. The HisF subunit catalyzes the cyclization activity that produces IGP and AICAR from PRFAR using the ammonia provided by the HisH subunit. This Neisseria gonorrhoeae (strain ATCC 700825 / FA 1090) protein is Imidazole glycerol phosphate synthase subunit HisF.